A 234-amino-acid polypeptide reads, in one-letter code: Transcription factor bHLH160 (234 aa).

Over residues 1–13 (MSSQPNHQTSISS) the composition is skewed to polar residues. The segment at 1–67 (MSSQPNHQTS…GAAKKQDHNA (67 aa)) is disordered. Positions 27–37 (IVEKESAEKDT) are enriched in basic and acidic residues. A bHLH domain is found at 60-115 (AKKQDHNAKERLRRMRLHASYLTLGTLLPDHSSSSSKKKWSAPSIIDNVITYIPKL).

The protein belongs to the bHLH protein family.

The protein localises to the nucleus. The protein is Transcription factor bHLH160 of Arabidopsis thaliana (Mouse-ear cress).